A 129-amino-acid polypeptide reads, in one-letter code: Flagellar assembly factor FliW 2 (129 aa).

Belongs to the FliW family. As to quaternary structure, interacts with translational regulator CsrA and flagellin(s).

Its subcellular location is the cytoplasm. Its function is as follows. Acts as an anti-CsrA protein, binds CsrA and prevents it from repressing translation of its target genes, one of which is flagellin. Binds to flagellin and participates in the assembly of the flagellum. The sequence is that of Flagellar assembly factor FliW 2 from Helicobacter pylori (strain J99 / ATCC 700824) (Campylobacter pylori J99).